A 256-amino-acid polypeptide reads, in one-letter code: Transmembrane protein 187 (256 aa).

Transmembrane regions (helical) follow at residues 8-28, 51-71, 94-112, 119-139, 146-168, 193-213, and 233-253; these read ALFH…TGIF, FLAM…GVYW, VFAG…RIGM, VLDQ…CLCL, WLFL…HPHG, NISS…FVVL, and FWSK…LTSL.

It is found in the membrane. This chain is Transmembrane protein 187 (TMEM187), found in Bos taurus (Bovine).